The chain runs to 364 residues: Suberization-associated anionic peroxidase 1 (364 aa).

A signal peptide spans 1 to 25; the sequence is MGFRLSHLSLALSFVALALAGVAIY. N-linked (GlcNAc...) asparagine glycosylation occurs at asparagine 36. 2 disulfide bridges follow: cysteine 81/cysteine 160 and cysteine 112/cysteine 117. Catalysis depends on histidine 110, which acts as the Proton acceptor. Aspartate 111, valine 114, glycine 116, and aspartate 118 together coordinate Ca(2+). N-linked (GlcNAc...) asparagine glycans are attached at residues asparagine 127, asparagine 162, and asparagine 200. Intrachain disulfides connect cysteine 167/cysteine 353 and cysteine 246/cysteine 265. Proline 209 is a binding site for substrate. Residues asparagine 214 and asparagine 226 are each glycosylated (N-linked (GlcNAc...) asparagine). Histidine 239 is a binding site for heme b. Threonine 240 serves as a coordination point for Ca(2+). N-linked (GlcNAc...) asparagine glycosylation occurs at asparagine 264. Positions 278, 280, and 285 each coordinate Ca(2+).

It belongs to the peroxidase family. Classical plant (class III) peroxidase subfamily. It depends on Ca(2+) as a cofactor. The cofactor is heme b.

The protein resides in the secreted. It carries out the reaction 2 a phenolic donor + H2O2 = 2 a phenolic radical donor + 2 H2O. Functionally, removal of H(2)O(2), oxidation of toxic reductants, biosynthesis and degradation of lignin, suberization, auxin catabolism, response to environmental stresses such as wounding, pathogen attack and oxidative stress. These functions might be dependent on each isozyme/isoform in each plant tissue. Suggested to catalyze the deposition of the aromatic residues of suberin on the cell wall and thus play a role in cell-suberization. This chain is Suberization-associated anionic peroxidase 1 (TAP1), found in Solanum lycopersicum (Tomato).